Here is a 526-residue protein sequence, read N- to C-terminus: Peptide chain release factor 3 (526 aa).

A tr-type G domain is found at 9–277; it reads DKRRTFAIIS…GIVEWAPKPL (269 aa). GTP contacts are provided by residues 18-25, 86-90, and 140-143; these read SHPDAGKT, DTPGH, and NKLD.

Belongs to the TRAFAC class translation factor GTPase superfamily. Classic translation factor GTPase family. PrfC subfamily.

It is found in the cytoplasm. Its function is as follows. Increases the formation of ribosomal termination complexes and stimulates activities of RF-1 and RF-2. It binds guanine nucleotides and has strong preference for UGA stop codons. It may interact directly with the ribosome. The stimulation of RF-1 and RF-2 is significantly reduced by GTP and GDP, but not by GMP. The chain is Peptide chain release factor 3 from Shewanella sp. (strain MR-4).